Here is a 1851-residue protein sequence, read N- to C-terminus: Chitin synthase (1851 aa).

Positions 1-21 are disordered; that stretch reads MQYHQHQHQFPGPGPSHTSVY. Topologically, residues 1–108 are cytoplasmic; sequence MQYHQHQHQF…KDTLYNGFLQ (108 aa). A helical membrane pass occupies residues 109–129; that stretch reads VLKMITFVALFVTTLGSSILA. Residues 130–168 are Extracellular-facing; it reads KLSLLVMAAGLGQAGHNISICPDKIPESPKNSVLISPKN. Residue N146 is glycosylated (N-linked (GlcNAc...) asparagine). The helical transmembrane segment at 169–189 threads the bilayer; that stretch reads AAKWAWALLLAICIPELLCFA. Residues 190-208 are Cytoplasmic-facing; it reads RSLHRSLFRKVRGPSFLQF. A helical transmembrane segment spans residues 209–229; the sequence is LLVFTVESVHAFGLGALVFAI. Topologically, residues 230–234 are extracellular; the sequence is MPRGM. The helical transmembrane segment at 235 to 255 threads the bilayer; sequence VITMLQLGNSLCLIPSLLLPL. At 256-261 the chain is on the cytoplasmic side; that stretch reads SRSRSR. The chain crosses the membrane as a helical span at residues 262-282; sequence WLPLLLLLDGSAILAQSSAAI. The Extracellular segment spans residues 283–291; the sequence is WRGSIPLER. A helical membrane pass occupies residues 292–312; that stretch reads FGFVFLCTSLISIAWWQNFVH. Residues 313–337 lie on the Cytoplasmic side of the membrane; sequence PHSFLPATRFFAHYAAKLRECRSKT. Residues 338-358 traverse the membrane as a helical segment; it reads FVVLSPWKCLIFTFCMFQFVP. Residues 359–544 lie on the Extracellular side of the membrane; that stretch reads PQIPFRELLQ…ELNQFTTAND (186 aa). 2 N-linked (GlcNAc...) asparagine glycosylation sites follow: N385 and N435. The interval 432-522 is disordered; that stretch reads LFRNGTRRPP…DADEQEEEEE (91 aa). A compositionally biased stretch (basic and acidic residues) spans 442-454; sequence KKEEVKKNKMDSK. Residues 455-465 show a composition bias toward basic residues; that stretch reads KKTKKLKKKKG. Residues 466–478 show a composition bias toward low complexity; that stretch reads GNNNATSTNSSEK. N469 and N474 each carry an N-linked (GlcNAc...) asparagine glycan. The span at 513-522 shows a compositional bias: acidic residues; that stretch reads DADEQEEEEE. A helical membrane pass occupies residues 545 to 565; the sequence is ALWLVFVQAGSVLLCQLCAKF. Over 566–573 the chain is Cytoplasmic; that stretch reads ACKVVMQR. A helical transmembrane segment spans residues 574–594; the sequence is VGLALPVVLSIPFGILFLAYS. Residues 595–631 are Extracellular-facing; that stretch reads CRQKATNPCHLSEWMSKELFWQCPTRPFHWQRFFREQ. Residues 632–652 form a helical membrane-spanning segment; the sequence is PNLLWLCWWLSQCWITIHLWL. Residues 653-1124 are Cytoplasmic-facing; the sequence is PRQERLAKSE…VSIWYIAYQL (472 aa). Positions 693 to 718 are disordered; sequence SEDIDTEEEANEGGGEQEDGNSSTHT. Acidic residues predominate over residues 696–711; the sequence is IDTEEEANEGGGEQED. A helical transmembrane segment spans residues 1125 to 1145; it reads VMLFSSVLGPGTIFLMIVGAI. Topologically, residues 1146–1154 are extracellular; the sequence is SISFNIDTR. The chain crosses the membrane as a helical span at residues 1155–1175; it reads LALLIVTTPVLCFCVCCLTCG. Residues 1176–1179 lie on the Cytoplasmic side of the membrane; that stretch reads TETQ. The chain crosses the membrane as a helical span at residues 1180 to 1200; that stretch reads LLLAQVIGALFAMLMTAVIVG. Topologically, residues 1201–1209 are extracellular; that stretch reads TSLQIQKDG. A helical transmembrane segment spans residues 1210–1230; it reads LLSPHSIFLFTVLGSWSFSAL. Residues 1231 to 1235 lie on the Cytoplasmic side of the membrane; it reads LHPLE. Residues 1236 to 1256 form a helical membrane-spanning segment; it reads FGCLLPCGLYFLAIPCMYMLL. Residues 1257 to 1461 lie on the Extracellular side of the membrane; the sequence is PVYSLCNLNT…QRGLNELRNT (205 aa). A glycan (N-linked (GlcNAc...) asparagine) is linked at N1274. Residues 1329 to 1383 adopt a coiled-coil conformation; it reads CADETVEVRKLDENFRKIERKLQSLERRTNGQGNNAEEEGKEEEETGKSEQERKE. Residues 1350-1402 are disordered; sequence LQSLERRTNGQGNNAEEEGKEEEETGKSEQERKEGREEGKEEEGKMSKRKKEE. Residues 1364–1373 are compositionally biased toward acidic residues; the sequence is AEEEGKEEEE. A compositionally biased stretch (basic and acidic residues) spans 1374–1402; the sequence is TGKSEQERKEGREEGKEEEGKMSKRKKEE. Residues 1462–1482 form a helical membrane-spanning segment; sequence CCSAFFMVNIVFIIVVLVLQL. Topologically, residues 1483 to 1527 are cytoplasmic; that stretch reads QKDCLHIEWPLGPLVNQTRVQCGGGGGRDFEGEEWIMSRLQLEPM. The helical transmembrane segment at 1528-1548 threads the bilayer; the sequence is GFVFIVFFLIILFIQFLAMLF. The Extracellular segment spans residues 1549–1851; it reads HRFGTFTHII…FLGTTNKRAK (303 aa). The interval 1626-1658 is disordered; it reads GKRQQNAQIPPRCEKGGNERGEESPTSLPAPPV. Positions 1637–1648 are enriched in basic and acidic residues; it reads RCEKGGNERGEE. N1660 is a glycosylation site (N-linked (GlcNAc...) asparagine). Residues 1765 to 1851 are disordered; sequence HSIFPSSSES…FLGTTNKRAK (87 aa). Residues 1781 to 1822 show a composition bias toward basic and acidic residues; sequence GGGRGRGREQERDKCLEGKKEKFRQRVEEGPARCHRLEELFG. Over residues 1823 to 1834 the composition is skewed to basic residues; the sequence is KSRKGGPQKRGK.

Belongs to the chitin synthase family. Class IV subfamily. In terms of processing, may require proteolytic cleavage for activation.

The protein localises to the cell membrane. It catalyses the reaction [(1-&gt;4)-N-acetyl-beta-D-glucosaminyl](n) + UDP-N-acetyl-alpha-D-glucosamine = [(1-&gt;4)-N-acetyl-beta-D-glucosaminyl](n+1) + UDP + H(+). Functionally, required for the synthesis of chitin. The protein is Chitin synthase of Meloidogyne artiellia (British root-knot nematode).